The primary structure comprises 764 residues: uncharacterized protein (764 aa).

At 1-646 the chain is on the lumenal side; it reads MKEENGFAGF…LTKLYTFPFT (646 aa). The interval 22-173 is disordered; the sequence is LNDTAPTKSQ…SAITAPSRKV (152 aa). N-linked (GlcNAc...) asparagine glycosylation is present at Asn-23. 2 stretches are compositionally biased toward polar residues: residues 25-41 and 61-82; these read TAPT…NNEG and SEAS…QSPS. The residue at position 80 (Ser-80) is a Phosphoserine. Residues 98 to 113 show a composition bias toward acidic residues; sequence ENQENEADEAENEETS. Asn-118 carries N-linked (GlcNAc...) asparagine glycosylation. Basic and acidic residues predominate over residues 118-145; sequence NHTENTEEIAEESRPLERTHSGSNHHEA. A compositionally biased stretch (polar residues) spans 158-173; the sequence is NTLSQGSAITAPSRKV. In terms of domain architecture, GRAM spans 197-264; that stretch reads RDFHRIFKVL…TEIVSVEKKS (68 aa). N-linked (GlcNAc...) asparagine glycans are attached at residues Asn-240 and Asn-330. The tract at residues 320 to 406 is disordered; that stretch reads ASGNHHSGSS…DGNSVKKMNE (87 aa). Residues 321 to 330 are compositionally biased toward low complexity; that stretch reads SGNHHSGSSN. Residues 331-340 show a composition bias toward polar residues; sequence QSINADSSAG. A compositionally biased stretch (acidic residues) spans 352–371; the sequence is ANDESSEDDDEDNNTDEANE. 2 N-linked (GlcNAc...) asparagine glycosylation sites follow: Asn-364 and Asn-376. Polar residues predominate over residues 389-399; that stretch reads HSDNVVLSDGN. The region spanning 432–598 is the VASt domain; that stretch reads LAHVLCSDVV…AFENYKVSPK (167 aa). N-linked (GlcNAc...) asparagine glycans are attached at residues Asn-442 and Asn-554. Basic residues predominate over residues 598 to 613; sequence KGRRKKITKHTKKKNK. The segment at 598–626 is disordered; it reads KGRRKKITKHTKKKNKHASETSVAPEKVD. The N-linked (GlcNAc...) asparagine glycan is linked to Asn-627. A helical membrane pass occupies residues 647–667; that stretch reads IITWLMHPTHLLLVVMFSMLV. Topologically, residues 668–764 are cytoplasmic; it reads LQWWYMQQIL…LRKLEASGYI (97 aa).

Belongs to the YSP2 family.

It is found in the membrane. This is an uncharacterized protein from Schizosaccharomyces pombe (strain 972 / ATCC 24843) (Fission yeast).